Consider the following 399-residue polypeptide: DJ-1 protein homolog F (399 aa).

PfpI endopeptidase domains follow at residues 7-199 (KSVL…ESLG) and 211-394 (TSLL…TALG).

The protein belongs to the peptidase C56 family. As to quaternary structure, homotrimer.

In terms of biological role, may be involved in oxidative stress response. This Arabidopsis thaliana (Mouse-ear cress) protein is DJ-1 protein homolog F (DJ1F).